Here is a 125-residue protein sequence, read N- to C-terminus: MEQLPSHPTNRRAKEEGNAVPLCRAKPSPSFINLQASSPPVTLLKILPTKLPSGINHKPKECLGLLECMYANLQLQTQLAQQQMAILENLQASKTQLAPGKENKNSSLPALSRNLLLSHLPQFSK.

The segment at Met1–Leu22 is disordered.

Belongs to the TSACC family. Interacts with HSP70. Associates with HSP90. Interacts with TSSK6; this interaction is direct and recruits TSACC to HSP90.

Co-chaperone that facilitates HSP-mediated activation of TSSK6. This Bos taurus (Bovine) protein is TSSK6-activating co-chaperone protein (TSACC).